The sequence spans 487 residues: Glutamyl-tRNA(Gln) amidotransferase subunit A (487 aa).

Catalysis depends on charge relay system residues K82 and S157. S181 acts as the Acyl-ester intermediate in catalysis.

The protein belongs to the amidase family. GatA subfamily. In terms of assembly, heterotrimer of A, B and C subunits.

The catalysed reaction is L-glutamyl-tRNA(Gln) + L-glutamine + ATP + H2O = L-glutaminyl-tRNA(Gln) + L-glutamate + ADP + phosphate + H(+). Functionally, allows the formation of correctly charged Gln-tRNA(Gln) through the transamidation of misacylated Glu-tRNA(Gln) in organisms which lack glutaminyl-tRNA synthetase. The reaction takes place in the presence of glutamine and ATP through an activated gamma-phospho-Glu-tRNA(Gln). In Fusobacterium nucleatum subsp. nucleatum (strain ATCC 25586 / DSM 15643 / BCRC 10681 / CIP 101130 / JCM 8532 / KCTC 2640 / LMG 13131 / VPI 4355), this protein is Glutamyl-tRNA(Gln) amidotransferase subunit A.